The following is a 200-amino-acid chain: Probable GTP-binding protein EngB (200 aa).

The 170-residue stretch at 30–199 (KKAEVAIAGR…EDYIYENWIK (170 aa)) folds into the EngB-type G domain. Residues 38–45 (GRSNAGKS), 64–68 (GKTRL), 82–85 (DMPG), 149–152 (TKAD), and 178–180 (VSA) contribute to the GTP site. Mg(2+) contacts are provided by Ser-45 and Thr-66.

This sequence belongs to the TRAFAC class TrmE-Era-EngA-EngB-Septin-like GTPase superfamily. EngB GTPase family. The cofactor is Mg(2+).

In terms of biological role, necessary for normal cell division and for the maintenance of normal septation. This chain is Probable GTP-binding protein EngB, found in Bdellovibrio bacteriovorus (strain ATCC 15356 / DSM 50701 / NCIMB 9529 / HD100).